The sequence spans 637 residues: Glutathione hydrolase 3 (637 aa).

A helical membrane pass occupies residues 28–48 (LKISLLLLLILLATSGYYSFS). Asn-50 carries an N-linked (GlcNAc...) asparagine glycan. Arg-147 contacts L-glutamate. N-linked (GlcNAc...) asparagine glycans are attached at residues Asn-271, Asn-374, and Asn-398. Residue Thr-418 is the Nucleophile of the active site. L-glutamate-binding positions include Thr-436, Asn-438, Glu-457, Asp-460, 488–489 (SS), and 509–510 (GG). Residue Asn-553 is glycosylated (N-linked (GlcNAc...) asparagine).

This sequence belongs to the gamma-glutamyltransferase family. Expressed in roots, cotyledons, leaves, flowers and siliques.

The protein resides in the vacuole membrane. The catalysed reaction is an N-terminal (5-L-glutamyl)-[peptide] + an alpha-amino acid = 5-L-glutamyl amino acid + an N-terminal L-alpha-aminoacyl-[peptide]. The enzyme catalyses glutathione + H2O = L-cysteinylglycine + L-glutamate. It carries out the reaction an S-substituted glutathione + H2O = an S-substituted L-cysteinylglycine + L-glutamate. Its pathway is sulfur metabolism; glutathione metabolism. Its function is as follows. May play a role in protecting plants from some xenobiotic chemicals by degrading vacuolar glutathione conjugates into cysteine conjugates. In Arabidopsis thaliana (Mouse-ear cress), this protein is Glutathione hydrolase 3 (GGT3).